The sequence spans 146 residues: 3-dehydroquinate dehydratase (146 aa).

The Proton acceptor role is filled by Tyr22. Substrate contacts are provided by Asn73, His79, and Asp86. His99 (proton donor) is an active-site residue. Residues 100 to 101 and Arg110 contribute to the substrate site; that span reads LS.

The protein belongs to the type-II 3-dehydroquinase family. As to quaternary structure, homododecamer.

The catalysed reaction is 3-dehydroquinate = 3-dehydroshikimate + H2O. Its pathway is metabolic intermediate biosynthesis; chorismate biosynthesis; chorismate from D-erythrose 4-phosphate and phosphoenolpyruvate: step 3/7. Functionally, catalyzes a trans-dehydration via an enolate intermediate. In Parasynechococcus marenigrum (strain WH8102), this protein is 3-dehydroquinate dehydratase.